Consider the following 123-residue polypeptide: Large ribosomal subunit protein bL12 (123 aa).

Belongs to the bacterial ribosomal protein bL12 family. Homodimer. Part of the ribosomal stalk of the 50S ribosomal subunit. Forms a multimeric L10(L12)X complex, where L10 forms an elongated spine to which 2 to 4 L12 dimers bind in a sequential fashion. Binds GTP-bound translation factors.

Forms part of the ribosomal stalk which helps the ribosome interact with GTP-bound translation factors. Is thus essential for accurate translation. This chain is Large ribosomal subunit protein bL12, found in Salmonella arizonae (strain ATCC BAA-731 / CDC346-86 / RSK2980).